Here is a 219-residue protein sequence, read N- to C-terminus: 3-dehydroquinate dehydratase (219 aa).

3-dehydroquinate-binding positions include 34-36 (ELR) and Arg63. His114 functions as the Proton donor/acceptor in the catalytic mechanism. Catalysis depends on Lys139, which acts as the Schiff-base intermediate with substrate. 3-dehydroquinate is bound by residues Arg174, Thr193, and Gln197.

The protein belongs to the type-I 3-dehydroquinase family. In terms of assembly, homodimer.

The catalysed reaction is 3-dehydroquinate = 3-dehydroshikimate + H2O. Its pathway is metabolic intermediate biosynthesis; chorismate biosynthesis; chorismate from D-erythrose 4-phosphate and phosphoenolpyruvate: step 3/7. Functionally, involved in the third step of the chorismate pathway, which leads to the biosynthesis of aromatic amino acids. Catalyzes the cis-dehydration of 3-dehydroquinate (DHQ) and introduces the first double bond of the aromatic ring to yield 3-dehydroshikimate. The chain is 3-dehydroquinate dehydratase from Sulfolobus acidocaldarius (strain ATCC 33909 / DSM 639 / JCM 8929 / NBRC 15157 / NCIMB 11770).